The following is a 386-amino-acid chain: 8-amino-7-oxononanoate synthase (386 aa).

Arginine 23 provides a ligand contact to substrate. 110 to 111 (GY) is a binding site for pyridoxal 5'-phosphate. Histidine 135 contacts substrate. Pyridoxal 5'-phosphate is bound by residues serine 181, histidine 209, and threonine 236. Lysine 239 bears the N6-(pyridoxal phosphate)lysine mark. Threonine 354 contacts substrate.

It belongs to the class-II pyridoxal-phosphate-dependent aminotransferase family. BioF subfamily. In terms of assembly, homodimer. It depends on pyridoxal 5'-phosphate as a cofactor.

The enzyme catalyses 6-carboxyhexanoyl-[ACP] + L-alanine + H(+) = (8S)-8-amino-7-oxononanoate + holo-[ACP] + CO2. It participates in cofactor biosynthesis; biotin biosynthesis. Catalyzes the decarboxylative condensation of pimeloyl-[acyl-carrier protein] and L-alanine to produce 8-amino-7-oxononanoate (AON), [acyl-carrier protein], and carbon dioxide. The chain is 8-amino-7-oxononanoate synthase from Thiobacillus denitrificans (strain ATCC 25259 / T1).